The chain runs to 504 residues: UDP-GalNAc:beta-1,3-N-acetylgalactosaminyltransferase 2 (504 aa).

Over 1–3 (MRN) the chain is Cytoplasmic. The helical; Signal-anchor for type II membrane protein transmembrane segment at 4-24 (WLVLLCPCVLGAALHLWHLWL) threads the bilayer. Over 25-504 (RSPPDPHNTG…DPCQCEAKVR (480 aa)) the chain is Lumenal. N-linked (GlcNAc...) asparagine glycans are attached at residues Asn117 and Asn176.

It belongs to the glycosyltransferase 31 family. N-glycosylated. In terms of tissue distribution, present in testis (at protein level). In testis, it is mainly detected in the middle layers of seminiferous tubules at stages XII to II. Strongly expressed in primary and secondary spermatocytes and early round spermatids, but not in spermatogonia, elongating or elongated spermatids, or in Leydig or Sertoli cells.

It localises to the golgi apparatus membrane. Its subcellular location is the endoplasmic reticulum. The enzyme catalyses 3-O-(N-acetyl-beta-D-glucosaminyl-(1-&gt;4)-alpha-D-mannosyl)-L-threonyl-[protein] + UDP-N-acetyl-alpha-D-galactosamine = 3-O-[beta-D-GalNAc-(1-&gt;3)-beta-D-GlcNAc-(1-&gt;4)-alpha-D-Man]-L-Thr-[protein] + UDP + H(+). Its pathway is protein modification; protein glycosylation. Functionally, beta-1,3-N-acetylgalactosaminyltransferase that synthesizes a unique carbohydrate structure, GalNAc-beta-1-3GlcNAc, on N- and O-glycans. Has no galactose nor galactosaminyl transferase activity toward any acceptor substrate. Involved in alpha-dystroglycan (DAG1) glycosylation: acts coordinately with GTDC2/POMGnT2 to synthesize a GalNAc-beta3-GlcNAc-beta-terminus at the 4-position of protein O-mannose in the biosynthesis of the phosphorylated O-mannosyl trisaccharide (N-acetylgalactosamine-beta-3-N-acetylglucosamine-beta-4-(phosphate-6-)mannose), a carbohydrate structure present in alpha-dystroglycan, which is required for binding laminin G-like domain-containing extracellular proteins with high affinity. In Mus musculus (Mouse), this protein is UDP-GalNAc:beta-1,3-N-acetylgalactosaminyltransferase 2 (B3galnt2).